We begin with the raw amino-acid sequence, 435 residues long: tRNA(Ile)-lysidine synthase (435 aa).

25 to 30 (SGGLDS) is a binding site for ATP.

The protein belongs to the tRNA(Ile)-lysidine synthase family.

Its subcellular location is the cytoplasm. It catalyses the reaction cytidine(34) in tRNA(Ile2) + L-lysine + ATP = lysidine(34) in tRNA(Ile2) + AMP + diphosphate + H(+). Its function is as follows. Ligates lysine onto the cytidine present at position 34 of the AUA codon-specific tRNA(Ile) that contains the anticodon CAU, in an ATP-dependent manner. Cytidine is converted to lysidine, thus changing the amino acid specificity of the tRNA from methionine to isoleucine. This Photobacterium profundum (strain SS9) protein is tRNA(Ile)-lysidine synthase.